The primary structure comprises 101 residues: Large ribosomal subunit protein uL23 (101 aa).

Belongs to the universal ribosomal protein uL23 family. Part of the 50S ribosomal subunit. Contacts protein L29, and trigger factor when it is bound to the ribosome.

Its function is as follows. One of the early assembly proteins it binds 23S rRNA. One of the proteins that surrounds the polypeptide exit tunnel on the outside of the ribosome. Forms the main docking site for trigger factor binding to the ribosome. The chain is Large ribosomal subunit protein uL23 from Lactobacillus helveticus (strain DPC 4571).